We begin with the raw amino-acid sequence, 48 residues long: 2-deoxy-glucose resistant protein 1, mitochondrial (48 aa).

The transit peptide at 1–28 (MQVGFVSQTNCRSFPACIVFLFQMSQRQ) directs the protein to the mitochondrion.

The protein resides in the mitochondrion. This Saccharomyces cerevisiae (strain ATCC 204508 / S288c) (Baker's yeast) protein is 2-deoxy-glucose resistant protein 1, mitochondrial (DGR1).